Here is a 239-residue protein sequence, read N- to C-terminus: MDYAMKSLSLLYPRSLSRHVAVSTAVVTQQLVSKPSRETPRARPCRVSTADRKVRKGIMAHSLEDLLNKVQDILKLKDKPFSLVLEEDGTIVETEEYFQALAKDTMFMVLLKGQKWKPPSEQRKKRAQLALSQKPTKKIDVARVTFDLYKLNPQDFIGCLNVKATLYDTYSLSYDLHCYKAKRIVKEMLRWTLFSMQATGHMLLGTSSYMQQFLDATEEEQPAKAKPSSLLPACLKMLQ.

Residues 1-35 (MDYAMKSLSLLYPRSLSRHVAVSTAVVTQQLVSKP) form a required for liquid-liquid phase separation (LLPS) region. A CIDE-N domain is found at 41-118 (RARPCRVSTA…VLLKGQKWKP (78 aa)). Positions 123–126 (RKKR) match the RKKR polybasic motif motif.

It belongs to the CIDE family. As to quaternary structure, homodimer. Homooligomer; undergoes liquid-liquid phase separation (LLPS) via its N-terminus, facilitating lipid droplet fusion, occurs at the lipid droplet contact sites. Interacts with CIDEA. Interacts with PLIN1. Interacts with NFAT5; this interaction is direct and retains NFAT5 in the cytoplasm. Interacts with CEBPB. Interacts with isoform CLSTN3beta of CLSTN3; inhibiting the lipid transferase activity of CIDEC. Ubiquitinated and targeted to proteasomal degradation, resulting in a short half-life (about 15 minutes in 3T3-L1 cells). Protein stability depends on triaclyglycerol synthesis, fatty acid availability and lipid droplet formation. As to expression, expressed almost exclusively in adipose tissue, including subcutaneous and epididymal white adipose tissue (at protein level). Although abundantly present in brown adipose tissue at the mRNA level, the protein is almost undetectable in this tissue, or at moderate levels. Expressed in the mammary gland, in stromal adipose tissue, but becomes undetectable at the end of pregnancy and during lactation (at protein level). Expressed at low levels in skeletal muscle and heart.

The protein resides in the lipid droplet. Its subcellular location is the endoplasmic reticulum. It is found in the nucleus. The catalysed reaction is a triacyl-sn-glycerol(in) = a triacyl-sn-glycerol(out). In terms of biological role, lipid transferase specifically expressed in white adipose tissue, which promotes unilocular lipid droplet formation by mediating lipid droplet fusion. Lipid droplet fusion promotes their enlargement, restricting lipolysis and favoring lipid storage. Localizes on the lipid droplet surface, at focal contact sites between lipid droplets, and mediates atypical lipid droplet fusion by undergoing liquid-liquid phase separation (LLPS) and promoting directional net neutral lipid transfer from the smaller to larger lipid droplets. The transfer direction may be driven by the internal pressure difference between the contacting lipid droplet pair. Its role in neutral lipid transfer and lipid droplet enlargement is activated by the interaction with PLIN1. May also act as a CEBPB coactivator in the white adipose tissue to control the expression of a subset of CEBPB downstream target genes, including SOCS1, SOCS3, TGFB1, TGFBR1, ID2 and XDH. When overexpressed in preadipocytes, induces apoptosis or increases cell susceptibility to apoptosis induced by serum deprivation or TGFB treatment. This chain is Lipid transferase CIDEC, found in Mus musculus (Mouse).